Reading from the N-terminus, the 89-residue chain is Putative defensin-like protein 254 (89 aa).

The first 20 residues, 1–20, serve as a signal peptide directing secretion; that stretch reads MHNISFKLLLLCDLFLSSSS. Cystine bridges form between cysteine 31–cysteine 48 and cysteine 37–cysteine 55.

It belongs to the DEFL family.

The protein resides in the secreted. The sequence is that of Putative defensin-like protein 254 from Arabidopsis thaliana (Mouse-ear cress).